The sequence spans 132 residues: Small ribosomal subunit protein eS12 (132 aa).

Residue A2 is modified to N-acetylalanine. K129 carries the post-translational modification N6-succinyllysine.

It belongs to the eukaryotic ribosomal protein eS12 family. Part of the small subunit (SSU) processome, composed of more than 70 proteins and the RNA chaperone small nucleolar RNA (snoRNA) U3. Subunit of the 40S ribosomal complex.

Its subcellular location is the nucleus. It localises to the nucleolus. In terms of biological role, part of the small subunit (SSU) processome, first precursor of the small eukaryotic ribosomal subunit. During the assembly of the SSU processome in the nucleolus, many ribosome biogenesis factors, an RNA chaperone and ribosomal proteins associate with the nascent pre-rRNA and work in concert to generate RNA folding, modifications, rearrangements and cleavage as well as targeted degradation of pre-ribosomal RNA by the RNA exosome. Subunit of the 40S ribosomal complex. The sequence is that of Small ribosomal subunit protein eS12 (Rps12) from Mus musculus (Mouse).